A 100-amino-acid polypeptide reads, in one-letter code: Integration host factor subunit alpha (100 aa).

The tract at residues 54–73 (DLRDKRQRPGRNPKTGEEIP) is disordered.

Belongs to the bacterial histone-like protein family. As to quaternary structure, heterodimer of an alpha and a beta chain.

Its function is as follows. This protein is one of the two subunits of integration host factor, a specific DNA-binding protein that functions in genetic recombination as well as in transcriptional and translational control. This chain is Integration host factor subunit alpha, found in Pseudomonas aeruginosa (strain UCBPP-PA14).